The following is a 324-amino-acid chain: Antihemorrhagic factor cMSF (324 aa).

The first 19 residues, 1-19 (MHFLVALVLLGQIIGSTLS), serve as a signal peptide directing secretion. Cystatin fetuin-A-type domains lie at 22-130 (VRGD…VKCH) and 141-254 (RNCL…SDCV). The Cell attachment site signature appears at 23-25 (RGD). 7 cysteine pairs are disulfide-bonded: C28-C315, C85-C96, C110-C129, C143-C146, C205-C217, C230-C253, and C287-C291. N204 carries an N-linked (GlcNAc...) asparagine glycan. N282 is a glycosylation site (N-linked (GlcNAc...) asparagine).

As to quaternary structure, homodimer. In terms of tissue distribution, expressed by the liver.

The protein localises to the secreted. Suppress hemorrhage induced by metalloproteinases from the same venom (brevilysin-H3, -H4, -H6) and from habu venom (metalloproteinases HR1A and HR1B). The non-hemorrhagic brevilysin-L4 is not inhibited by cMSF. Does not inhibit serine and cysteine proteases such as trypsin, chymotrypsin, thermolysin, and papain. The inhibition may occur by formation of a non-covalent complex between this protein and the proteinases at their metalloproteinase domains. In Gloydius brevicauda (Korean slamosa snake), this protein is Antihemorrhagic factor cMSF.